The sequence spans 656 residues: Cyclic AMP-dependent transcription factor ATF-6 alpha (656 aa).

The transcription activation stretch occupies residues 1-137 (MESPFSPVLP…SPSSAEPLKE (137 aa)). Residue Lys-75 forms a Glycyl lysine isopeptide (Lys-Gly) (interchain with G-Cter in SUMO2) linkage. Composition is skewed to low complexity over residues 81 to 101 (LSPA…SCSS) and 111 to 121 (LLSSSQSPLSL). Positions 81–171 (LSPASSSCSV…SKPSVQPKPL (91 aa)) are disordered. Lys-139 is covalently cross-linked (Glycyl lysine isopeptide (Lys-Gly) (interchain with G-Cter in ubiquitin)). Residues 293-356 (VLRRQQRMIK…DQVVSENQRL (64 aa)) enclose the bZIP domain. The tract at residues 295-326 (RRQQRMIKNRESACQSRKKKKEYMLGLEARLK) is basic motif. Positions 335-342 (LKKENGSL) are leucine-zipper. The chain crosses the membrane as a helical; Signal-anchor for type II membrane protein span at residues 378-398 (NYGPMSMLEQDSRRVKPSVSP). Residues 399 to 656 (ANQRRHLLEF…VVSTLPESVQ (258 aa)) lie on the Lumenal side of the membrane. Positions 455-575 (QPLINTTESL…ATTHNKTTRP (121 aa)) are interaction with THBS4. Residues Asn-459, Asn-570, and Asn-629 are each glycosylated (N-linked (GlcNAc...) asparagine). The tract at residues 632–656 (STFFGSPPTATETTHVVSTLPESVQ) is disordered.

It belongs to the bZIP family. ATF subfamily. Interacts with XBP1 isoform 2; the interaction occurs in a ER stress-dependent manner. Interacts with LACC1. As to quaternary structure, interacts with THBS4 (via EGF-like 3; calcium-binding domain) which facilitates its processing, activation and nuclear translocation. Interacts (via lumenal domain) with THBS1. In terms of assembly, homodimer and heterodimer with ATF6-beta. The dimer interacts with the nuclear transcription factor Y (NF-Y) trimer through direct binding to NF-Y subunit C (NF-YC). Also interacts with the transcription factors GTF2I, YY1 and SRF. During unfolded protein response, a fragment of approximately 50 kDa containing the cytoplasmic transcription factor domain is released by proteolysis. The cleavage seems to be performed sequentially by site-1 (MBTPS1, S1P) and site-2 (MBTPS2, S2P) proteases. Post-translationally, N-glycosylated; in its luminal domain. The glycosylation status may serve as a sensor for ER homeostasis, resulting in ATF6 activation to trigger the unfolded protein response (UPR). In terms of processing, ubiquitinated by RNF186 at Lys-139, which is required for pattern recognition receptor-induced unfolded protein response-associated outcomes.

It is found in the endoplasmic reticulum membrane. The protein resides in the golgi apparatus membrane. Its subcellular location is the nucleus. In terms of biological role, precursor of the transcription factor form (Processed cyclic AMP-dependent transcription factor ATF-6 alpha), which is embedded in the endoplasmic reticulum membrane. Endoplasmic reticulum stress promotes processing of this form, releasing the transcription factor form that translocates into the nucleus, where it activates transcription of genes involved in the unfolded protein response (UPR). Transcription factor that initiates the unfolded protein response (UPR) during endoplasmic reticulum stress by activating transcription of genes involved in the UPR. Binds DNA on the 5'-CCAC[GA]-3'half of the ER stress response element (ERSE) (5'-CCAAT-N(9)-CCAC[GA]-3') and of ERSE II (5'-ATTGG-N-CCACG-3'). Binding to ERSE requires binding of NF-Y to ERSE. Could also be involved in activation of transcription by the serum response factor. May play a role in foveal development and cone function in the retina. This is Cyclic AMP-dependent transcription factor ATF-6 alpha (Atf6) from Rattus norvegicus (Rat).